The following is a 260-amino-acid chain: Dehydrogenase/reductase SDR family member 4 (260 aa).

An NADP(+)-binding site is contributed by 14-38 (IVTAATKGIGLAIAERLLDEGASVV). Residue Ser148 coordinates substrate. Tyr161 serves as the catalytic Proton acceptor. Lys165 provides a ligand contact to NADP(+).

It belongs to the short-chain dehydrogenases/reductases (SDR) family.

The enzyme catalyses a secondary alcohol + NADP(+) = a ketone + NADPH + H(+). Functionally, catalyzes the reduction of isatin, 4-oxonon-2-enal, 9,10-phenanthrenequinone, menadione, 2,3-hexaenadione, 3,4-hexanedione and 2,3-heptanedione. In Caenorhabditis elegans, this protein is Dehydrogenase/reductase SDR family member 4.